The primary structure comprises 442 residues: Elongation factor 1-gamma (442 aa).

The GST N-terminal domain maps to 2–87 (AAGTLYTYPE…FLSNDALRGS (86 aa)). In terms of domain architecture, GST C-terminal spans 88-216 (TPQASAQVLQ…VKLCEKMAQF (129 aa)). Composition is skewed to basic and acidic residues over residues 224 to 242 (MQPK…KEGG) and 249 to 263 (QEKK…KAAP). The segment at 224 to 273 (MQPKKEAPAKKEKAGKEGGKQQQPQQEKKEKKKEEKKAAPAEEEMDECEA) is disordered. An EF-1-gamma C-terminal domain is found at 281–442 (AKDPYAHLPK…KSFNQGKIFK (162 aa)).

As to quaternary structure, EF-1 is composed of four subunits: alpha, beta, delta, and gamma.

Functionally, probably plays a role in anchoring the complex to other cellular components. In Carassius auratus (Goldfish), this protein is Elongation factor 1-gamma (eef1g).